The following is an 83-amino-acid chain: UPF0297 protein LEUM_0557 (83 aa).

It belongs to the UPF0297 family.

The protein is UPF0297 protein LEUM_0557 of Leuconostoc mesenteroides subsp. mesenteroides (strain ATCC 8293 / DSM 20343 / BCRC 11652 / CCM 1803 / JCM 6124 / NCDO 523 / NBRC 100496 / NCIMB 8023 / NCTC 12954 / NRRL B-1118 / 37Y).